A 376-amino-acid polypeptide reads, in one-letter code: D-alanine--D-alanine ligase B (376 aa).

The ATP-grasp domain occupies 155 to 361 (KRLMRDAGLP…QTDLMDKLIA (207 aa)). 184–239 (AALGTPDLFVKPANLGSSVGVSRARSEEEFAASCALAFRYDRKILVEQALNGAREI) serves as a coordination point for ATP. 3 residues coordinate Mg(2+): D316, E328, and N330.

It belongs to the D-alanine--D-alanine ligase family. Mg(2+) serves as cofactor. The cofactor is Mn(2+).

It localises to the cytoplasm. It catalyses the reaction 2 D-alanine + ATP = D-alanyl-D-alanine + ADP + phosphate + H(+). The protein operates within cell wall biogenesis; peptidoglycan biosynthesis. In terms of biological role, cell wall formation. The chain is D-alanine--D-alanine ligase B from Bradyrhizobium diazoefficiens (strain JCM 10833 / BCRC 13528 / IAM 13628 / NBRC 14792 / USDA 110).